Reading from the N-terminus, the 610-residue chain is Isocitrate dehydrogenase kinase/phosphatase (610 aa).

Residues 359-365 (APGFKGT) and K380 each bind ATP. The active site involves D419.

The protein belongs to the AceK family.

It is found in the cytoplasm. The catalysed reaction is L-seryl-[isocitrate dehydrogenase] + ATP = O-phospho-L-seryl-[isocitrate dehydrogenase] + ADP + H(+). Bifunctional enzyme which can phosphorylate or dephosphorylate isocitrate dehydrogenase (IDH) on a specific serine residue. This is a regulatory mechanism which enables bacteria to bypass the Krebs cycle via the glyoxylate shunt in response to the source of carbon. When bacteria are grown on glucose, IDH is fully active and unphosphorylated, but when grown on acetate or ethanol, the activity of IDH declines drastically concomitant with its phosphorylation. In Rhodopseudomonas palustris (strain ATCC BAA-98 / CGA009), this protein is Isocitrate dehydrogenase kinase/phosphatase.